We begin with the raw amino-acid sequence, 140 residues long: C-type lectin 6 (140 aa).

Residues 1–23 (MGRLVFVSFGLLVVFLSLSGTGA) form the signal peptide. Intrachain disulfides connect Cys25–Cys36, Cys53–Cys138, and Cys115–Cys130. The region spanning 32-139 (YEGHCYRVFQ…CSKTHNVICK (108 aa)) is the C-type lectin domain.

Belongs to the snaclec family. Heteromultimer; disulfide-linked. Expressed by the venom gland.

Its subcellular location is the secreted. In terms of biological role, interferes with one step of hemostasis (modulation of platelet aggregation, or coagulation cascade, for example). This Crotalus adamanteus (Eastern diamondback rattlesnake) protein is C-type lectin 6.